Consider the following 178-residue polypeptide: Large ribosomal subunit protein bL25 (178 aa).

This sequence belongs to the bacterial ribosomal protein bL25 family. CTC subfamily. Part of the 50S ribosomal subunit; part of the 5S rRNA/L5/L18/L25 subcomplex. Contacts the 5S rRNA. Binds to the 5S rRNA independently of L5 and L18.

Its function is as follows. This is one of the proteins that binds to the 5S RNA in the ribosome where it forms part of the central protuberance. The chain is Large ribosomal subunit protein bL25 from Wolinella succinogenes (strain ATCC 29543 / DSM 1740 / CCUG 13145 / JCM 31913 / LMG 7466 / NCTC 11488 / FDC 602W) (Vibrio succinogenes).